Reading from the N-terminus, the 435-residue chain is Phosphomethylpyrimidine synthase (435 aa).

Substrate contacts are provided by residues Asn67, Met96, Tyr125, His163, Ser185–Gly187, Asp226–Arg229, and Glu265. His269 lines the Zn(2+) pocket. Position 292 (Tyr292) interacts with substrate. His333 provides a ligand contact to Zn(2+). [4Fe-4S] cluster-binding residues include Cys408, Cys411, and Cys415.

It belongs to the ThiC family. [4Fe-4S] cluster serves as cofactor.

It catalyses the reaction 5-amino-1-(5-phospho-beta-D-ribosyl)imidazole + S-adenosyl-L-methionine = 4-amino-2-methyl-5-(phosphooxymethyl)pyrimidine + CO + 5'-deoxyadenosine + formate + L-methionine + 3 H(+). It functions in the pathway cofactor biosynthesis; thiamine diphosphate biosynthesis. Its function is as follows. Catalyzes the synthesis of the hydroxymethylpyrimidine phosphate (HMP-P) moiety of thiamine from aminoimidazole ribotide (AIR) in a radical S-adenosyl-L-methionine (SAM)-dependent reaction. The chain is Phosphomethylpyrimidine synthase from Thermus thermophilus (strain ATCC BAA-163 / DSM 7039 / HB27).